A 232-amino-acid chain; its full sequence is Beta-casein (232 aa).

Residues 1–15 (MKLLILACFVALALA) form the signal peptide. N-linked (GlcNAc...) asparagine glycosylation occurs at asparagine 22. Serine 24 carries the post-translational modification Phosphoserine. A Phosphothreonine modification is found at threonine 27. Phosphoserine is present on residues serine 30, serine 32, serine 33, and serine 34. The span at 48–63 (KLKREEQQQTENERQN) shows a compositional bias: basic and acidic residues. The disordered stretch occupies residues 48 to 74 (KLKREEQQQTENERQNKIHQFPQPQPL).

This sequence belongs to the beta-casein family. Mammary gland specific. Secreted in milk.

It localises to the secreted. Important role in determination of the surface properties of the casein micelles. The sequence is that of Beta-casein (CSN2) from Sus scrofa (Pig).